The sequence spans 89 residues: MTEAKKSLKRTLIGKVVSDKRAKTVTVLVERRVKHELYGKIVSLSSKYHAHDEKGEFKTGDVIEITESRPISKTKNWVVTRLVQKAEIV.

Belongs to the universal ribosomal protein uS17 family. Part of the 30S ribosomal subunit.

In terms of biological role, one of the primary rRNA binding proteins, it binds specifically to the 5'-end of 16S ribosomal RNA. The polypeptide is Small ribosomal subunit protein uS17 (Polaromonas naphthalenivorans (strain CJ2)).